A 338-amino-acid polypeptide reads, in one-letter code: Ketol-acid reductoisomerase (NADP(+)) (338 aa).

The KARI N-terminal Rossmann domain maps to 1–181; the sequence is MKVYYDKDCN…GGGRSGIIET (181 aa). NADP(+) contacts are provided by residues 24 to 27, arginine 47, serine 50, serine 52, and 82 to 85; these read YGSQ and DETQ. Residue histidine 107 is part of the active site. Glycine 133 is a binding site for NADP(+). One can recognise a KARI C-terminal knotted domain in the interval 182 to 327; it reads NFREETETDL…ARLRAMMPWI (146 aa). 4 residues coordinate Mg(2+): aspartate 190, glutamate 194, glutamate 226, and glutamate 230. Serine 251 serves as a coordination point for substrate.

The protein belongs to the ketol-acid reductoisomerase family. Requires Mg(2+) as cofactor.

It carries out the reaction (2R)-2,3-dihydroxy-3-methylbutanoate + NADP(+) = (2S)-2-acetolactate + NADPH + H(+). It catalyses the reaction (2R,3R)-2,3-dihydroxy-3-methylpentanoate + NADP(+) = (S)-2-ethyl-2-hydroxy-3-oxobutanoate + NADPH + H(+). It participates in amino-acid biosynthesis; L-isoleucine biosynthesis; L-isoleucine from 2-oxobutanoate: step 2/4. The protein operates within amino-acid biosynthesis; L-valine biosynthesis; L-valine from pyruvate: step 2/4. Involved in the biosynthesis of branched-chain amino acids (BCAA). Catalyzes an alkyl-migration followed by a ketol-acid reduction of (S)-2-acetolactate (S2AL) to yield (R)-2,3-dihydroxy-isovalerate. In the isomerase reaction, S2AL is rearranged via a Mg-dependent methyl migration to produce 3-hydroxy-3-methyl-2-ketobutyrate (HMKB). In the reductase reaction, this 2-ketoacid undergoes a metal-dependent reduction by NADPH to yield (R)-2,3-dihydroxy-isovalerate. This is Ketol-acid reductoisomerase (NADP(+)) from Pelobacter propionicus (strain DSM 2379 / NBRC 103807 / OttBd1).